Consider the following 509-residue polypeptide: Poly(A) RNA polymerase GLD2-B (509 aa).

The interval 88 to 125 is disordered; that stretch reads PGSPPSSFQNRKRRSDEGNSPYDVKRQRFQSPQEQTVN. Over residues 116 to 125 the composition is skewed to polar residues; it reads FQSPQEQTVN. Residues Asp-240 and Asp-242 each contribute to the Mg(2+) site. Residues 409–462 form the PAP-associated domain; it reads LGDLLLGFLKYFAVEFDWSKDIISLREAKALPRTDDYEWRNKYICVEEPFDGSN.

It belongs to the DNA polymerase type-B-like family. GLD2 subfamily. In terms of assembly, component of a complex at least composed of cpeb1, cpsf1, tent2/gld2, pabpc1/ePAB, parn and sympk. Following oocyte maturation, parn is expelled from the complex. Interacts with rbfox2. Interacts with sympk. Requires Mg(2+) as cofactor. Mn(2+) is required as a cofactor.

Its subcellular location is the cytoplasm. It catalyses the reaction RNA(n) + ATP = RNA(n)-3'-adenine ribonucleotide + diphosphate. Cytoplasmic poly(A) RNA polymerase that adds successive AMP monomers to the 3'-end of specific RNAs, forming a poly(A) tail. In contrast to the canonical nuclear poly(A) RNA polymerase, it only adds poly(A) to selected cytoplasmic mRNAs during oocyte maturation. Plays a central role during oocyte maturation by mediating polyadenylation of dormant mRNAs, which contain 5'AAUAAA-3' sequence in their 3'-UTR. In immature oocytes, polyadenylation of poly(A) tails is counteracted by the ribonuclease parn. During maturation parn is excluded from the ribonucleoprotein complex, allowing poly(A) elongation and activation of mRNAs. May not play a role in replication-dependent histone mRNA degradation. This is Poly(A) RNA polymerase GLD2-B from Xenopus laevis (African clawed frog).